Reading from the N-terminus, the 138-residue chain is Basic phospholipase A2 Tpu-G6D49 (138 aa).

Residues 1 to 16 (MRTLWIMAVLLVGVEG) form the signal peptide. 7 disulfides stabilise this stretch: C42/C131, C44/C60, C59/C111, C65/C138, C66/C104, C73/C97, and C91/C102. The Ca(2+) site is built by Y43, G45, and G47. H63 is a catalytic residue. D64 contributes to the Ca(2+) binding site. Residue D105 is part of the active site.

Monomer. The cofactor is Ca(2+). As to expression, expressed by the venom gland.

It localises to the secreted. It carries out the reaction a 1,2-diacyl-sn-glycero-3-phosphocholine + H2O = a 1-acyl-sn-glycero-3-phosphocholine + a fatty acid + H(+). Snake venom phospholipase A2 (PLA2) that impairs hemostasis. It weakly inhibits ADP-induced platelet aggregation when tested on platelet rich plasma from human and rabbit blood (15-25% of inhibition at 5-10 ug of enzyme), and dose-dependently inhibits blood coagulation, possibly by inhibiting thrombin activation. Also induces local edema a few hours after injection in the hind foot. Exhibits high hydrolytic activities toward L-dipalmitoyl phosphatidylcholine. PLA2 catalyzes the calcium-dependent hydrolysis of the 2-acyl groups in 3-sn-phosphoglycerides. This chain is Basic phospholipase A2 Tpu-G6D49, found in Craspedocephalus puniceus (Flat-nosed pitviper).